A 159-amino-acid chain; its full sequence is 3-hydroxyacyl-[acyl-carrier-protein] dehydratase FabZ (159 aa).

Residue His-58 is part of the active site.

It belongs to the thioester dehydratase family. FabZ subfamily.

The protein resides in the cytoplasm. It catalyses the reaction a (3R)-hydroxyacyl-[ACP] = a (2E)-enoyl-[ACP] + H2O. Functionally, involved in unsaturated fatty acids biosynthesis. Catalyzes the dehydration of short chain beta-hydroxyacyl-ACPs and long chain saturated and unsaturated beta-hydroxyacyl-ACPs. In Helicobacter pylori (strain G27), this protein is 3-hydroxyacyl-[acyl-carrier-protein] dehydratase FabZ.